The following is a 263-amino-acid chain: Exosome complex component Rrp4 (263 aa).

The S1 motif domain maps to 51–127 (GKYIPSRKDF…KAMKVELSMR (77 aa)). Positions 135 to 196 (SKGRIIEVVP…DRLTTAIEMI (62 aa)) constitute a KH domain. The tract at residues 213-263 (LRGEPEGTEGSDEEQLVDEEVAGVSLEDDDVTEETSRKVDVLLDNDTDETN) is disordered. Positions 218–245 (EGTEGSDEEQLVDEEVAGVSLEDDDVTE) are enriched in acidic residues.

The protein belongs to the RRP4 family. As to quaternary structure, component of the archaeal exosome complex. Forms a trimer of Rrp4 and/or Csl4 subunits. The trimer associates with a hexameric ring-like arrangement composed of 3 Rrp41-Rrp42 heterodimers.

Its subcellular location is the cytoplasm. In terms of biological role, non-catalytic component of the exosome, which is a complex involved in RNA degradation. Increases the RNA binding and the efficiency of RNA degradation. Confers strong poly(A) specificity to the exosome. The chain is Exosome complex component Rrp4 from Methanococcoides burtonii (strain DSM 6242 / NBRC 107633 / OCM 468 / ACE-M).